Here is a 257-residue protein sequence, read N- to C-terminus: Type III pantothenate kinase (257 aa).

6–13 (DCGNTNTV) contributes to the ATP binding site. 107–110 (GPDR) contacts substrate. Asp109 functions as the Proton acceptor in the catalytic mechanism. Asp129 serves as a coordination point for K(+). Thr132 serves as a coordination point for ATP. Residue Thr184 participates in substrate binding.

This sequence belongs to the type III pantothenate kinase family. Homodimer. Requires NH4(+) as cofactor. The cofactor is K(+).

Its subcellular location is the cytoplasm. It carries out the reaction (R)-pantothenate + ATP = (R)-4'-phosphopantothenate + ADP + H(+). It participates in cofactor biosynthesis; coenzyme A biosynthesis; CoA from (R)-pantothenate: step 1/5. Catalyzes the phosphorylation of pantothenate (Pan), the first step in CoA biosynthesis. This chain is Type III pantothenate kinase, found in Cereibacter sphaeroides (strain ATCC 17029 / ATH 2.4.9) (Rhodobacter sphaeroides).